Consider the following 467-residue polypeptide: UDP-N-acetylmuramoylalanine--D-glutamate ligase (467 aa).

121 to 127 (GTNGKST) is an ATP binding site.

The protein belongs to the MurCDEF family.

It localises to the cytoplasm. The catalysed reaction is UDP-N-acetyl-alpha-D-muramoyl-L-alanine + D-glutamate + ATP = UDP-N-acetyl-alpha-D-muramoyl-L-alanyl-D-glutamate + ADP + phosphate + H(+). It functions in the pathway cell wall biogenesis; peptidoglycan biosynthesis. Cell wall formation. Catalyzes the addition of glutamate to the nucleotide precursor UDP-N-acetylmuramoyl-L-alanine (UMA). The polypeptide is UDP-N-acetylmuramoylalanine--D-glutamate ligase (Brucella abortus (strain 2308)).